The primary structure comprises 353 residues: Photosystem II protein D1 (353 aa).

The residue at position 2 (Thr2) is an N-acetylthreonine. The residue at position 2 (Thr2) is a Phosphothreonine. The next 3 helical transmembrane spans lie at 29-46 (NIGW…TATS), 118-133 (HFLL…EWEL), and 142-156 (WIAV…AATA). Chlorophyll a is bound at residue His118. Tyr126 contacts pheophytin a. The [CaMn4O5] cluster site is built by Asp170 and Glu189. A helical transmembrane segment spans residues 197-218 (FHMLGVAGVFGGSLFSAMHGSL). Position 198 (His198) interacts with chlorophyll a. A quinone contacts are provided by residues His215 and 264–265 (SF). Residue His215 participates in Fe cation binding. His272 is a Fe cation binding site. The chain crosses the membrane as a helical span at residues 274–288 (FLAAWPVVGIWFTAL). [CaMn4O5] cluster contacts are provided by His332, Glu333, Asp342, and Ala344. A propeptide spanning residues 345 to 353 (AVEAPAVNG) is cleaved from the precursor.

Belongs to the reaction center PufL/M/PsbA/D family. As to quaternary structure, PSII is composed of 1 copy each of membrane proteins PsbA, PsbB, PsbC, PsbD, PsbE, PsbF, PsbH, PsbI, PsbJ, PsbK, PsbL, PsbM, PsbT, PsbX, PsbY, PsbZ, Psb30/Ycf12, at least 3 peripheral proteins of the oxygen-evolving complex and a large number of cofactors. It forms dimeric complexes. The D1/D2 heterodimer binds P680, chlorophylls that are the primary electron donor of PSII, and subsequent electron acceptors. It shares a non-heme iron and each subunit binds pheophytin, quinone, additional chlorophylls, carotenoids and lipids. D1 provides most of the ligands for the Mn4-Ca-O5 cluster of the oxygen-evolving complex (OEC). There is also a Cl(-1) ion associated with D1 and D2, which is required for oxygen evolution. The PSII complex binds additional chlorophylls, carotenoids and specific lipids. is required as a cofactor. Tyr-161 forms a radical intermediate that is referred to as redox-active TyrZ, YZ or Y-Z. In terms of processing, C-terminally processed by CTPA; processing is essential to allow assembly of the oxygen-evolving complex and thus photosynthetic growth.

The protein resides in the plastid. The protein localises to the chloroplast thylakoid membrane. The catalysed reaction is 2 a plastoquinone + 4 hnu + 2 H2O = 2 a plastoquinol + O2. Its function is as follows. Photosystem II (PSII) is a light-driven water:plastoquinone oxidoreductase that uses light energy to abstract electrons from H(2)O, generating O(2) and a proton gradient subsequently used for ATP formation. It consists of a core antenna complex that captures photons, and an electron transfer chain that converts photonic excitation into a charge separation. The D1/D2 (PsbA/PsbD) reaction center heterodimer binds P680, the primary electron donor of PSII as well as several subsequent electron acceptors. In Dumortiera hirsuta (Liverwort), this protein is Photosystem II protein D1.